The following is a 29-amino-acid chain: Potassium-transporting ATPase KdpF subunit (29 aa).

The helical transmembrane segment at 2-22 threads the bilayer; that stretch reads LIGEAVLAVVTVAVVAYLTYV.

Belongs to the KdpF family. The system is composed of three essential subunits: KdpA, KdpB and KdpC. The complex also contains KdpF, a small non-essential subunit.

The protein resides in the cell membrane. Part of the high-affinity ATP-driven potassium transport (or Kdp) system, which catalyzes the hydrolysis of ATP coupled with the electrogenic transport of potassium into the cytoplasm. This subunit may be involved in stabilization of the complex. The Kdp system is essential for growth under K(+) limitation, and for survival under desiccation and salt crystal inclusion. The sequence is that of Potassium-transporting ATPase KdpF subunit from Halobacterium salinarum (strain ATCC 29341 / DSM 671 / R1).